Consider the following 269-residue polypeptide: Indole-3-glycerol phosphate synthase (269 aa).

The protein belongs to the TrpC family.

The enzyme catalyses 1-(2-carboxyphenylamino)-1-deoxy-D-ribulose 5-phosphate + H(+) = (1S,2R)-1-C-(indol-3-yl)glycerol 3-phosphate + CO2 + H2O. Its pathway is amino-acid biosynthesis; L-tryptophan biosynthesis; L-tryptophan from chorismate: step 4/5. The polypeptide is Indole-3-glycerol phosphate synthase (Saccharopolyspora erythraea (strain ATCC 11635 / DSM 40517 / JCM 4748 / NBRC 13426 / NCIMB 8594 / NRRL 2338)).